The sequence spans 163 residues: Crossover junction endodeoxyribonuclease RuvC (163 aa).

Catalysis depends on residues D7, E67, and D140. Mg(2+) is bound by residues D7, E67, and D140.

The protein belongs to the RuvC family. As to quaternary structure, homodimer which binds Holliday junction (HJ) DNA. The HJ becomes 2-fold symmetrical on binding to RuvC with unstacked arms; it has a different conformation from HJ DNA in complex with RuvA. In the full resolvosome a probable DNA-RuvA(4)-RuvB(12)-RuvC(2) complex forms which resolves the HJ. It depends on Mg(2+) as a cofactor.

It localises to the cytoplasm. The catalysed reaction is Endonucleolytic cleavage at a junction such as a reciprocal single-stranded crossover between two homologous DNA duplexes (Holliday junction).. Functionally, the RuvA-RuvB-RuvC complex processes Holliday junction (HJ) DNA during genetic recombination and DNA repair. Endonuclease that resolves HJ intermediates. Cleaves cruciform DNA by making single-stranded nicks across the HJ at symmetrical positions within the homologous arms, yielding a 5'-phosphate and a 3'-hydroxyl group; requires a central core of homology in the junction. The consensus cleavage sequence is 5'-(A/T)TT(C/G)-3'. Cleavage occurs on the 3'-side of the TT dinucleotide at the point of strand exchange. HJ branch migration catalyzed by RuvA-RuvB allows RuvC to scan DNA until it finds its consensus sequence, where it cleaves and resolves the cruciform DNA. This chain is Crossover junction endodeoxyribonuclease RuvC, found in Petrotoga mobilis (strain DSM 10674 / SJ95).